The chain runs to 119 residues: NADH-quinone oxidoreductase subunit A (119 aa).

A run of 3 helical transmembrane segments spans residues 7–27 (FPVLLFLIVGTGLGVALVSIG), 63–83 (LVAILFIIFDLETAFLFPWGV), and 88–108 (IGWPGFMAMMIFLLEFLLGFA).

The protein belongs to the complex I subunit 3 family. NDH-1 is composed of 14 different subunits. Subunits NuoA, H, J, K, L, M, N constitute the membrane sector of the complex.

It localises to the cell inner membrane. The enzyme catalyses a quinone + NADH + 5 H(+)(in) = a quinol + NAD(+) + 4 H(+)(out). In terms of biological role, NDH-1 shuttles electrons from NADH, via FMN and iron-sulfur (Fe-S) centers, to quinones in the respiratory chain. The immediate electron acceptor for the enzyme in this species is believed to be ubiquinone. Couples the redox reaction to proton translocation (for every two electrons transferred, four hydrogen ions are translocated across the cytoplasmic membrane), and thus conserves the redox energy in a proton gradient. This chain is NADH-quinone oxidoreductase subunit A, found in Paraburkholderia xenovorans (strain LB400).